A 63-amino-acid chain; its full sequence is Large ribosomal subunit protein uL29 (63 aa).

It belongs to the universal ribosomal protein uL29 family.

This is Large ribosomal subunit protein uL29 from Chromohalobacter salexigens (strain ATCC BAA-138 / DSM 3043 / CIP 106854 / NCIMB 13768 / 1H11).